The sequence spans 380 residues: Queuine tRNA-ribosyltransferase (380 aa).

The Proton acceptor role is filled by D96. Residues D96–F100, D150, Q193, and G220 each bind substrate. Residues G251 to S257 form an RNA binding region. The Nucleophile role is filled by D270. Positions T275–R279 are RNA binding; important for wobble base 34 recognition. C308, C310, C313, and H339 together coordinate Zn(2+).

It belongs to the queuine tRNA-ribosyltransferase family. As to quaternary structure, homodimer. Within each dimer, one monomer is responsible for RNA recognition and catalysis, while the other monomer binds to the replacement base PreQ1. Requires Zn(2+) as cofactor.

The catalysed reaction is 7-aminomethyl-7-carbaguanine + guanosine(34) in tRNA = 7-aminomethyl-7-carbaguanosine(34) in tRNA + guanine. The protein operates within tRNA modification; tRNA-queuosine biosynthesis. Its function is as follows. Catalyzes the base-exchange of a guanine (G) residue with the queuine precursor 7-aminomethyl-7-deazaguanine (PreQ1) at position 34 (anticodon wobble position) in tRNAs with GU(N) anticodons (tRNA-Asp, -Asn, -His and -Tyr). Catalysis occurs through a double-displacement mechanism. The nucleophile active site attacks the C1' of nucleotide 34 to detach the guanine base from the RNA, forming a covalent enzyme-RNA intermediate. The proton acceptor active site deprotonates the incoming PreQ1, allowing a nucleophilic attack on the C1' of the ribose to form the product. After dissociation, two additional enzymatic reactions on the tRNA convert PreQ1 to queuine (Q), resulting in the hypermodified nucleoside queuosine (7-(((4,5-cis-dihydroxy-2-cyclopenten-1-yl)amino)methyl)-7-deazaguanosine). The chain is Queuine tRNA-ribosyltransferase from Streptococcus suis (strain 98HAH33).